Consider the following 117-residue polypeptide: Immunoglobulin heavy variable 3-5 (117 aa).

The first 18 residues, 1 to 18, serve as a signal peptide directing secretion; the sequence is MKMFTLLYLLTVVPGILS. The region spanning 19–117 is the Ig-like domain; it reads DVQLQESGPG…EDTATYYCAR (99 aa). Cys-40 and Cys-115 are oxidised to a cystine.

The sequence is that of Immunoglobulin heavy variable 3-5 from Mus musculus (Mouse).